The chain runs to 361 residues: Diacylglycerol O-acyltransferase 2 (361 aa).

Residues 1–42 lie on the Cytoplasmic side of the membrane; sequence MKTLIAAYSGVLRGTGSSILSALQDLFSVTWLNRAKVEKQLQ. The chain crosses the membrane as a helical span at residues 43-61; sequence VISVLQWVLSFLVLGVACS. At 62–65 the chain is on the lumenal side; sequence VILM. Residues 66–85 traverse the membrane as a helical segment; sequence YTFCTDCWLIAVLYFTWLVF. Residues 86 to 361 lie on the Cytoplasmic side of the membrane; it reads DWNTPKKGGR…LPETEVLEVN (276 aa).

This sequence belongs to the diacylglycerol acyltransferase family. As to quaternary structure, forms multimeric complexes consisting of several DGAT2 subunits. Interacts with SLC27A1 and this interaction is enhanced in the presence of ZFYVE1.

It is found in the endoplasmic reticulum membrane. The protein localises to the lipid droplet. Its subcellular location is the cytoplasm. The protein resides in the perinuclear region. It catalyses the reaction an acyl-CoA + a 1,2-diacyl-sn-glycerol = a triacyl-sn-glycerol + CoA. The catalysed reaction is all-trans-retinol + an acyl-CoA = an all-trans-retinyl ester + CoA. The enzyme catalyses 2-(9Z-octadecenoyl)-glycerol + (9Z)-octadecenoyl-CoA = 1,2-di-(9Z-octadecenoyl)-sn-glycerol + CoA. It carries out the reaction 1,2-di-(9Z-octadecenoyl)-sn-glycerol + (9Z)-octadecenoyl-CoA = 1,2,3-tri-(9Z-octadecenoyl)-glycerol + CoA. It catalyses the reaction all-trans-retinol + hexadecanoyl-CoA = all-trans-retinyl hexadecanoate + CoA. The catalysed reaction is 1-O-(9Z-octadecenyl)-glycerol + (9Z)-octadecenoyl-CoA = 1-O-(9Z-octadecyl)-3-(9Z-octadecenoyl)-glycerol + CoA. The enzyme catalyses 1-(9Z-octadecenoyl)-glycerol + (9Z)-octadecenoyl-CoA = 1,2-di-(9Z-octadecenoyl)-glycerol + CoA. It carries out the reaction 1,2-di-(9Z-octadecenoyl)-sn-glycerol + hexadecanoyl-CoA = 1,2-di-(9Z)-octadecenoyl-3-hexadecanoyl-sn-glycerol + CoA. It catalyses the reaction 1,3-di-(9Z-octadecenoyl)-glycerol + (9Z)-octadecenoyl-CoA = 1,2,3-tri-(9Z-octadecenoyl)-glycerol + CoA. The catalysed reaction is 2,3-di-(9Z)-octadecenoyl-sn-glycerol + (9Z)-octadecenoyl-CoA = 1,2,3-tri-(9Z-octadecenoyl)-glycerol + CoA. The enzyme catalyses 2-(9Z-octadecenoyl)-glycerol + hexadecanoyl-CoA = 1-hexadecanoyl-2-(9Z-octadecenoyl)-sn-glycerol + CoA. It participates in glycerolipid metabolism; triacylglycerol biosynthesis. Its activity is regulated as follows. Inhibited by niacin. Functionally, essential acyltransferase that catalyzes the terminal and only committed step in triacylglycerol synthesis by using diacylglycerol and fatty acyl CoA as substrates. Required for synthesis and storage of intracellular triglycerides. Probably plays a central role in cytosolic lipid accumulation. In liver, is primarily responsible for incorporating endogenously synthesized fatty acids into triglycerides. Also functions as an acyl-CoA retinol acyltransferase (ARAT). Also able to use 1-monoalkylglycerol (1-MAkG) as an acyl acceptor for the synthesis of monoalkyl-monoacylglycerol (MAMAG). This is Diacylglycerol O-acyltransferase 2 (DGAT2) from Bos taurus (Bovine).